The primary structure comprises 760 residues: Catecholate siderophore receptor Fiu (760 aa).

The N-terminal stretch at 1 to 31 (MENNRNFPARQFHSLTFFAGLCIGITPVAQA) is a signal peptide. In terms of domain architecture, TBDR plug spans 67-175 (PVADTTRTMT…PTGSINMISK (109 aa)). In terms of domain architecture, TBDR beta-barrel spans 180 to 760 (DSGIDASASI…TFLLTANMHF (581 aa)). Residues 743–760 (RYHPGEPRTFLLTANMHF) carry the TonB C-terminal box motif.

The protein belongs to the TonB-dependent receptor family.

The protein localises to the cell outer membrane. Its function is as follows. Involved in the active transport across the outer membrane of iron complexed with catecholate siderophores such as dihydroxybenzoylserine and dihydroxybenzoate. It derives its energy for transport by interacting with the trans-periplasmic membrane protein TonB. Can also transport catechol-substituted cephalosporins. Receptor for microcins M, H47 and E492. The chain is Catecholate siderophore receptor Fiu (fiu) from Escherichia coli (strain K12).